The following is a 306-amino-acid chain: BRCA2 and CDKN1A-interacting protein (306 aa).

Residues Met-1–Val-10 are compositionally biased toward basic residues. Residues Met-1–Val-45 form a disordered region. The segment covering Gly-18 to Val-45 has biased composition (acidic residues). Residues Ser-34 and Ser-104 each carry the phosphoserine modification. An interaction with BRCA2 region spans residues Ile-51–Arg-159. The interval Met-153–Lys-251 is interaction with CDKN1A. Ser-273 carries the phosphoserine modification.

It belongs to the BCP1 family. As to quaternary structure, interacts with BRCA2, CDKN1A and MTDH/LYRIC. Interacts with DCTN1/p150-glued and ACTR1A/ARP1. Interacts with alpha-, beta- and gamma-tubulins. Interacts with TENT5C; the interaction has no effect on TENT5C poly(A) polymerase function.

The protein resides in the nucleus. The protein localises to the cytoplasm. It localises to the cytoskeleton. It is found in the microtubule organizing center. Its subcellular location is the centrosome. The protein resides in the centriole. The protein localises to the spindle pole. In terms of biological role, during interphase, required for microtubule organizing and anchoring activities. During mitosis, required for the organization and stabilization of the spindle pole. May promote cell cycle arrest by enhancing the inhibition of CDK2 activity by CDKN1A. May be required for repair of DNA damage by homologous recombination in conjunction with BRCA2. May not be involved in non-homologous end joining (NHEJ). The sequence is that of BRCA2 and CDKN1A-interacting protein (BCCIP) from Bos taurus (Bovine).